The chain runs to 184 residues: Tyrosine-protein kinase receptor Tie-1 (184 aa).

The Protein kinase domain maps to 1–164; it reads QLLQFAADVA…RMQEARKAYV (164 aa). D25 acts as the Proton acceptor in catalysis. At Y53 the chain carries Phosphotyrosine; by autocatalysis.

It belongs to the protein kinase superfamily. Tyr protein kinase family. Tie subfamily. In terms of assembly, interacts with svep1. Expressed in most populations of endothelial cells in 24 hours embryos, including the endocardium.

The protein resides in the cell membrane. The catalysed reaction is L-tyrosyl-[protein] + ATP = O-phospho-L-tyrosyl-[protein] + ADP + H(+). Functionally, transmembrane tyrosine-protein kinase. Required for the formation of facial lymphatic structures and brain lymphatic endothelial cells. Also required for embryonic ventral and dorsal migration of parachordal lymphoblasts along the arterial intersegmental vessel. Plays a role in the embryonic formation of the dorsal longitudinal anastomotic vessel. The chain is Tyrosine-protein kinase receptor Tie-1 (tie1) from Danio rerio (Zebrafish).